Consider the following 67-residue polypeptide: ATP synthase protein 8 (67 aa).

The helical transmembrane segment at 8 to 24 (TWFITILSMLMTLFILF) threads the bilayer. Position 54 is an N6-acetyllysine; alternate (lysine 54). Position 54 is an N6-succinyllysine; alternate (lysine 54). Lysine 57 is subject to N6-acetyllysine.

The protein belongs to the ATPase protein 8 family. In terms of assembly, F-type ATPases have 2 components, CF(1) - the catalytic core - and CF(0) - the membrane proton channel. Component of an ATP synthase complex composed of ATP5PB, ATP5MC1, ATP5F1E, ATP5PD, ATP5ME, ATP5PF, ATP5MF, MT-ATP6, MT-ATP8, ATP5F1A, ATP5F1B, ATP5F1D, ATP5F1C, ATP5PO, ATP5MG, ATP5MK and ATP5MJ. Interacts with PRICKLE3.

The protein resides in the mitochondrion membrane. Its function is as follows. Mitochondrial membrane ATP synthase (F(1)F(0) ATP synthase or Complex V) produces ATP from ADP in the presence of a proton gradient across the membrane which is generated by electron transport complexes of the respiratory chain. F-type ATPases consist of two structural domains, F(1) - containing the extramembraneous catalytic core and F(0) - containing the membrane proton channel, linked together by a central stalk and a peripheral stalk. During catalysis, ATP synthesis in the catalytic domain of F(1) is coupled via a rotary mechanism of the central stalk subunits to proton translocation. Part of the complex F(0) domain. Minor subunit located with subunit a in the membrane. This chain is ATP synthase protein 8 (MT-ATP8), found in Vicugna pacos (Alpaca).